The following is a 427-amino-acid chain: Anhydro-N-acetylmuramic acid kinase (427 aa).

Residue 32 to 39 (GTSLDGMD) participates in ATP binding.

This sequence belongs to the anhydro-N-acetylmuramic acid kinase family.

The catalysed reaction is 1,6-anhydro-N-acetyl-beta-muramate + ATP + H2O = N-acetyl-D-muramate 6-phosphate + ADP + H(+). The protein operates within amino-sugar metabolism; 1,6-anhydro-N-acetylmuramate degradation. Its pathway is cell wall biogenesis; peptidoglycan recycling. Functionally, catalyzes the specific phosphorylation of 1,6-anhydro-N-acetylmuramic acid (anhMurNAc) with the simultaneous cleavage of the 1,6-anhydro ring, generating MurNAc-6-P. Is required for the utilization of anhMurNAc either imported from the medium or derived from its own cell wall murein, and thus plays a role in cell wall recycling. The chain is Anhydro-N-acetylmuramic acid kinase from Psychrobacter cryohalolentis (strain ATCC BAA-1226 / DSM 17306 / VKM B-2378 / K5).